A 459-amino-acid chain; its full sequence is MLKLIAPTIMLLPLTWLSKKHMIWINTTTHSLIISIIPLLFFNQINNNLFSYSLSFSSDPLTTPLLMLTTWLLPLTIMASQRHLSNEPLSRKKLYLSMLISLQISLIMTFTATELIMFYIFFEATLIPTLVIITRWGNQPERLNAGTYFLFYTLVGSLPLLIALIHTHNTLGSLNILLLTLTAQELPNSWANNLMWLAYTMAFMVKMPLYGLHLWLPKAHVEAPIAGSMMLAAVLLKLGGYGMMRLMLILNPLTKHMAYPFLALSLWGMIMTSSISLRQTDLKSLIAYSSISHMALVVAAILIQTPWSFTGAVVLMIAHGLTSSLLFCLANSNYERTHSRIMILSQGLQTLLPLMALWWLLASLANLALPPTINLLGELSVLVTTFSWSNTTLLLTGSNMLITALYSLYMFTTTQWGPLTHHITNMKPSFTRENILMFMHLSPILLLSLNPDIITGFTS.

The next 13 helical transmembrane spans lie at 22 to 42 (MIWINTTTHSLIISIIPLLFF), 60 to 80 (PLTTPLLMLTTWLLPLTIMAS), 94 to 112 (LYLSMLISLQISLIMTFTA), 113 to 133 (TELIMFYIFFEATLIPTLVII), 145 to 165 (AGTYFLFYTLVGSLPLLIALI), 196 to 216 (WLAYTMAFMVKMPLYGLHLWL), 224 to 244 (PIAGSMMLAAVLLKLGGYGMM), 257 to 277 (MAYPFLALSLWGMIMTSSISL), 284 to 303 (SLIAYSSISHMALVVAAILI), 308 to 330 (SFTGAVVLMIAHGLTSSLLFCLA), 351 to 371 (LLPLMALWWLLASLANLALPP), 391 to 411 (TTLLLTGSNMLITALYSLYMF), and 435 to 455 (ILMFMHLSPILLLSLNPDIIT).

Belongs to the complex I subunit 4 family. Core subunit of respiratory chain NADH dehydrogenase (Complex I) which is composed of 45 different subunits.

It localises to the mitochondrion inner membrane. It carries out the reaction a ubiquinone + NADH + 5 H(+)(in) = a ubiquinol + NAD(+) + 4 H(+)(out). In terms of biological role, core subunit of the mitochondrial membrane respiratory chain NADH dehydrogenase (Complex I) which catalyzes electron transfer from NADH through the respiratory chain, using ubiquinone as an electron acceptor. Essential for the catalytic activity and assembly of complex I. This chain is NADH-ubiquinone oxidoreductase chain 4 (MT-ND4), found in Gorilla gorilla gorilla (Western lowland gorilla).